The sequence spans 124 residues: Large ribosomal subunit protein bL12 (124 aa).

Belongs to the bacterial ribosomal protein bL12 family. In terms of assembly, homodimer. Part of the ribosomal stalk of the 50S ribosomal subunit. Forms a multimeric L10(L12)X complex, where L10 forms an elongated spine to which 2 to 4 L12 dimers bind in a sequential fashion. Binds GTP-bound translation factors.

Functionally, forms part of the ribosomal stalk which helps the ribosome interact with GTP-bound translation factors. Is thus essential for accurate translation. The sequence is that of Large ribosomal subunit protein bL12 from Jannaschia sp. (strain CCS1).